Reading from the N-terminus, the 158-residue chain is Glycine/sarcosine/betaine reductase complex component A1 (158 aa).

Selenocysteine 46 is an active-site residue. Position 46 (selenocysteine 46) is a non-standard amino acid, selenocysteine.

This sequence belongs to the GrdA family. Monomer. Component of the glycine, sarcosine and betaine reductase complexes, together with components B and C.

It catalyses the reaction acetyl phosphate + [thioredoxin]-disulfide + NH4(+) + H2O = [thioredoxin]-dithiol + glycine + phosphate + H(+). It carries out the reaction acetyl phosphate + methylamine + [thioredoxin]-disulfide + H2O = sarcosine + [thioredoxin]-dithiol + phosphate + H(+). The catalysed reaction is acetyl phosphate + trimethylamine + [thioredoxin]-disulfide + H2O = glycine betaine + [thioredoxin]-dithiol + phosphate + H(+). In the first step of glycine, betaine and sarcosine reductases, the substrate is bound to component PB via a Schiff base intermediate. Then the PB-activated substrate is nucleophilically attacked by the selenol anion of component PA to transform it to a carboxymethylated selenoether and the respective amine. By action of component PC, acetyl phosphate is formed, leaving component PA in its oxidized state. Finally component PA becomes reduced by the thioredoxin system to start a new catalytic cycle of reductive deamination. In Photobacterium profundum (strain SS9), this protein is Glycine/sarcosine/betaine reductase complex component A1 (grdA1).